Here is a 149-residue protein sequence, read N- to C-terminus: Large ribosomal subunit protein bL9 (149 aa).

It belongs to the bacterial ribosomal protein bL9 family. In terms of assembly, part of the 50S ribosomal subunit. In stalled/collided disomes (pairs of ribosomes where the leading ribosome is stalled and a second ribosome has collided with it), bL9 in the collided ribosome contacts bS6 and uL2, while it contacts only helices of the 16S rRNA in the stalled ribosome; the inter-ribosome bridge thus formed is different from that formed between normally translating ribosomes.

Binds to the 23S rRNA. This is Large ribosomal subunit protein bL9 from Bacillus subtilis (strain 168).